Reading from the N-terminus, the 377-residue chain is uncharacterized protein (377 aa).

Positions 345 to 377 (VGPSPPAYEQVARSSPTDIPLPPPSCPTNVQRD) are disordered.

This is an uncharacterized protein from Schizosaccharomyces pombe (strain 972 / ATCC 24843) (Fission yeast).